Consider the following 431-residue polypeptide: Tol-Pal system protein TolB (431 aa).

The N-terminal stretch at 1–26 (MRLMTKLGFRALVASCLIAAGGAANA) is a signal peptide. Positions 411 to 431 (PQILSVQGGSVREPSWGPFMQ) are disordered.

Belongs to the TolB family. In terms of assembly, the Tol-Pal system is composed of five core proteins: the inner membrane proteins TolA, TolQ and TolR, the periplasmic protein TolB and the outer membrane protein Pal. They form a network linking the inner and outer membranes and the peptidoglycan layer.

The protein localises to the periplasm. In terms of biological role, part of the Tol-Pal system, which plays a role in outer membrane invagination during cell division and is important for maintaining outer membrane integrity. The protein is Tol-Pal system protein TolB of Burkholderia ambifaria (strain MC40-6).